The primary structure comprises 370 residues: Gametogenetin-binding protein 1 (370 aa).

Disordered regions lie at residues 26-114 (VGSK…QTLT) and 240-263 (PAAP…EEAV). Residues 31 to 49 (GSKSTNKPLTRSQPSSSWE) are compositionally biased toward polar residues. Residues 225–370 (LYKQLQKSAM…DEMGNWPPPD (146 aa)) are required for induction of mitochondrial fragmentation. The span at 250–260 (GLPHEEKGERE) shows a compositional bias: basic and acidic residues. The segment at 298 to 370 (KKFRSTDTVG…DEMGNWPPPD (73 aa)) is interaction with GGN.

Interacts with CCDC159. Interacts with isoform 1 and isoform 2 of GGN. As to expression, testis-specific. In the testis, expressed only in germ cells and not in somatic cells. Expression starts in late primary spermatocytes in stage X-XII tubules and gradually increases towards step 1-3 spermatids in stage I-III tubules. Expression then declines continuously and disappears after step 7 spermatids in stage VII tubules (at protein level).

It localises to the cytoplasm. It is found in the membrane. The protein resides in the golgi apparatus. Its subcellular location is the mitochondrion intermembrane space. Its function is as follows. Induces mitochondrial fragmentation, possibly by promoting DNM1L-dependent fission and may play a role in mitochondrial morphogenesis during spermatogenesis. This chain is Gametogenetin-binding protein 1 (Ggnbp1), found in Mus musculus (Mouse).